The chain runs to 577 residues: Arginine--tRNA ligase (577 aa).

A 'HIGH' region motif is present at residues proline 122 to histidine 132.

Belongs to the class-I aminoacyl-tRNA synthetase family. In terms of assembly, monomer.

The protein localises to the cytoplasm. It carries out the reaction tRNA(Arg) + L-arginine + ATP = L-arginyl-tRNA(Arg) + AMP + diphosphate. The chain is Arginine--tRNA ligase from Escherichia coli O7:K1 (strain IAI39 / ExPEC).